The following is a 201-amino-acid chain: Small ribosomal subunit protein uS4c (201 aa).

The S4 RNA-binding domain maps to 89–150 (MRLDNIVFRL…RQKSQAIITK (62 aa)).

This sequence belongs to the universal ribosomal protein uS4 family. Part of the 30S ribosomal subunit. Contacts protein S5. The interaction surface between S4 and S5 is involved in control of translational fidelity.

The protein localises to the plastid. It is found in the chloroplast. Its function is as follows. One of the primary rRNA binding proteins, it binds directly to 16S rRNA where it nucleates assembly of the body of the 30S subunit. In terms of biological role, with S5 and S12 plays an important role in translational accuracy. The chain is Small ribosomal subunit protein uS4c (rps4) from Funaria hygrometrica (Moss).